The chain runs to 139 residues: Putative esterase PM0788 (139 aa).

Belongs to the thioesterase PaaI family.

The chain is Putative esterase PM0788 from Pasteurella multocida (strain Pm70).